The following is a 466-amino-acid chain: Argininosuccinate lyase 1 (466 aa).

It belongs to the lyase 1 family. Argininosuccinate lyase subfamily.

It is found in the cytoplasm. The catalysed reaction is 2-(N(omega)-L-arginino)succinate = fumarate + L-arginine. It functions in the pathway amino-acid biosynthesis; L-arginine biosynthesis; L-arginine from L-ornithine and carbamoyl phosphate: step 3/3. The protein is Argininosuccinate lyase 1 of Mesorhizobium japonicum (strain LMG 29417 / CECT 9101 / MAFF 303099) (Mesorhizobium loti (strain MAFF 303099)).